A 494-amino-acid chain; its full sequence is 3-octaprenyl-4-hydroxybenzoate carboxy-lyase (494 aa).

N172 is a Mn(2+) binding site. Prenylated FMN-binding positions include 175–177 (IYR), 189–191 (RWL), and 194–195 (RG). E238 contacts Mn(2+). D287 serves as the catalytic Proton donor.

It belongs to the UbiD family. As to quaternary structure, homohexamer. Prenylated FMN is required as a cofactor. The cofactor is Mn(2+).

The protein localises to the cell membrane. The catalysed reaction is a 4-hydroxy-3-(all-trans-polyprenyl)benzoate + H(+) = a 2-(all-trans-polyprenyl)phenol + CO2. It participates in cofactor biosynthesis; ubiquinone biosynthesis. In terms of biological role, catalyzes the decarboxylation of 3-octaprenyl-4-hydroxy benzoate to 2-octaprenylphenol, an intermediate step in ubiquinone biosynthesis. The polypeptide is 3-octaprenyl-4-hydroxybenzoate carboxy-lyase (Shigella flexneri serotype 5b (strain 8401)).